Reading from the N-terminus, the 375-residue chain is Alcohol dehydrogenase 1 (375 aa).

An N-acetylserine modification is found at serine 2. Cysteine 47, histidine 68, cysteine 98, cysteine 101, cysteine 104, cysteine 112, and cysteine 175 together coordinate Zn(2+). Residues 200 to 205 (WSGRVG), aspartate 224, and lysine 229 each bind NAD(+). An N6-succinyllysine modification is found at lysine 234. 293 to 295 (VGV) serves as a coordination point for NAD(+). An N6-succinyllysine modification is found at lysine 340. Position 370 (arginine 370) interacts with NAD(+).

It belongs to the zinc-containing alcohol dehydrogenase family. Class-I subfamily. As to quaternary structure, homodimer. It depends on Zn(2+) as a cofactor.

It localises to the cytoplasm. The catalysed reaction is a primary alcohol + NAD(+) = an aldehyde + NADH + H(+). The enzyme catalyses a secondary alcohol + NAD(+) = a ketone + NADH + H(+). In Geomys knoxjonesi (Jones' pocket gopher), this protein is Alcohol dehydrogenase 1 (ADH1).